Reading from the N-terminus, the 640-residue chain is 1-deoxy-D-xylulose-5-phosphate synthase (640 aa).

Thiamine diphosphate contacts are provided by residues histidine 78 and 119 to 121 (GHS). Residue aspartate 151 participates in Mg(2+) binding. Residues 152-153 (GA), asparagine 180, tyrosine 289, and glutamate 371 contribute to the thiamine diphosphate site. A Mg(2+)-binding site is contributed by asparagine 180.

Belongs to the transketolase family. DXPS subfamily. In terms of assembly, homodimer. It depends on Mg(2+) as a cofactor. Requires thiamine diphosphate as cofactor.

It carries out the reaction D-glyceraldehyde 3-phosphate + pyruvate + H(+) = 1-deoxy-D-xylulose 5-phosphate + CO2. It functions in the pathway metabolic intermediate biosynthesis; 1-deoxy-D-xylulose 5-phosphate biosynthesis; 1-deoxy-D-xylulose 5-phosphate from D-glyceraldehyde 3-phosphate and pyruvate: step 1/1. Catalyzes the acyloin condensation reaction between C atoms 2 and 3 of pyruvate and glyceraldehyde 3-phosphate to yield 1-deoxy-D-xylulose-5-phosphate (DXP). The chain is 1-deoxy-D-xylulose-5-phosphate synthase from Bartonella henselae (strain ATCC 49882 / DSM 28221 / CCUG 30454 / Houston 1) (Rochalimaea henselae).